The chain runs to 402 residues: mRNA-capping enzyme subunit alpha (402 aa).

The N6-GMP-lysine intermediate role is filled by Lys67. The interval 374–402 (SVTKRKLDETSNDDAPAIKKVAKESEKEI) is disordered.

It belongs to the eukaryotic GTase family. Heterodimer. The mRNA-capping enzyme is composed of two separate chains alpha and beta, respectively a mRNA guanylyltransferase and an mRNA 5'-triphosphate monophosphatase.

The protein resides in the nucleus. The catalysed reaction is a 5'-end diphospho-ribonucleoside in mRNA + GTP + H(+) = a 5'-end (5'-triphosphoguanosine)-ribonucleoside in mRNA + diphosphate. In terms of biological role, second step of mRNA capping. Transfer of the GMP moiety of GTP to the 5'-end of RNA via an enzyme-GMP covalent reaction intermediate. In Schizosaccharomyces pombe (strain 972 / ATCC 24843) (Fission yeast), this protein is mRNA-capping enzyme subunit alpha (ceg1).